A 241-amino-acid polypeptide reads, in one-letter code: uncharacterized protein (241 aa).

The HTH luxR-type domain occupies 147–212 (FSYRSVILTL…EMYAWINSAQ (66 aa)).

This is an uncharacterized protein from Escherichia coli O157:H7.